The following is a 120-amino-acid chain: Kidney androgen-regulated protein (120 aa).

The N-terminal stretch at 1–18 is a signal peptide; that stretch reads MMICKVLVITVFCVLTVA.

The protein resides in the secreted. The sequence is that of Kidney androgen-regulated protein (Kap) from Rattus norvegicus (Rat).